The chain runs to 951 residues: Plasma membrane ATPase (951 aa).

4 helical membrane-spanning segments follow: residues 61-81, 93-113, 243-263, and 277-297; these read FLGF…IMAI, WEDF…SFIE, IGNF…IVMF, and LLVL…SVTM. The active-site 4-aspartylphosphate intermediate is the Asp329. Residues Asp588 and Asp592 each contribute to the Mg(2+) site. 6 consecutive transmembrane segments (helical) span residues 647–667, 671–691, 709–729, 752–772, 785–805, and 814–834; these read IYAV…ALIW, FSPF…MTIS, IFAT…IFFW, EMMS…IFVT, LLLV…AVYA, and GIGW…YFPL.

The protein belongs to the cation transport ATPase (P-type) (TC 3.A.3) family. Type IIIA subfamily.

It is found in the cell membrane. The enzyme catalyses ATP + H2O + H(+)(in) = ADP + phosphate + 2 H(+)(out). In terms of biological role, the plasma membrane ATPase of plants and fungi is a hydrogen ion pump. The proton gradient it generates drives the active transport of nutrients by H(+)-symport. The resulting external acidification and/or internal alkinization may mediate growth responses. In Oryza sativa subsp. japonica (Rice), this protein is Plasma membrane ATPase.